A 131-amino-acid chain; its full sequence is Small ribosomal subunit protein uS8 (131 aa).

Residues 1 to 27 are disordered; it reads MSMTDPVADMLTRIRNGQRASKNEVSM.

It belongs to the universal ribosomal protein uS8 family. As to quaternary structure, part of the 30S ribosomal subunit. Contacts proteins S5 and S12.

In terms of biological role, one of the primary rRNA binding proteins, it binds directly to 16S rRNA central domain where it helps coordinate assembly of the platform of the 30S subunit. The polypeptide is Small ribosomal subunit protein uS8 (Thioalkalivibrio sulfidiphilus (strain HL-EbGR7)).